Here is a 499-residue protein sequence, read N- to C-terminus: Glutamyl-tRNA(Gln) amidotransferase subunit A, mitochondrial (499 aa).

Catalysis depends on charge relay system residues Lys61 and Ser139. The Acyl-ester intermediate role is filled by Ser163.

This sequence belongs to the amidase family. GatA subfamily. In terms of assembly, subunit of the heterotrimeric GatCAB amidotransferase (AdT) complex, composed of A, B and C subunits.

Its subcellular location is the mitochondrion. It carries out the reaction L-glutamyl-tRNA(Gln) + L-glutamine + ATP + H2O = L-glutaminyl-tRNA(Gln) + L-glutamate + ADP + phosphate + H(+). In terms of biological role, allows the formation of correctly charged Gln-tRNA(Gln) through the transamidation of misacylated Glu-tRNA(Gln) in the mitochondria. The reaction takes place in the presence of glutamine and ATP through an activated gamma-phospho-Glu-tRNA(Gln). The chain is Glutamyl-tRNA(Gln) amidotransferase subunit A, mitochondrial from Coccidioides posadasii (strain C735) (Valley fever fungus).